A 188-amino-acid chain; its full sequence is Tumor necrosis factor alpha-induced protein 8-like protein (188 aa).

The protein belongs to the TNFAIP8 family.

This Drosophila pseudoobscura pseudoobscura (Fruit fly) protein is Tumor necrosis factor alpha-induced protein 8-like protein.